The chain runs to 487 residues: Betaine aldehyde dehydrogenase (487 aa).

K(+)-binding residues include isoleucine 27 and aspartate 93. 149–151 (GAW) lines the NAD(+) pocket. Residue lysine 161 is the Charge relay system of the active site. Residues 175 to 178 (KPSE) and 228 to 231 (SVPT) each bind NAD(+). Leucine 243 is a binding site for K(+). Glutamate 249 acts as the Proton acceptor in catalysis. 3 residues coordinate NAD(+): glycine 251, cysteine 283, and glutamate 384. Residue cysteine 283 is the Nucleophile of the active site. Cysteine sulfenic acid (-SOH) is present on cysteine 283. K(+) contacts are provided by lysine 454 and glycine 457. Glutamate 461 serves as the catalytic Charge relay system.

The protein belongs to the aldehyde dehydrogenase family. In terms of assembly, dimer of dimers. K(+) serves as cofactor.

It catalyses the reaction betaine aldehyde + NAD(+) + H2O = glycine betaine + NADH + 2 H(+). The protein operates within amine and polyamine biosynthesis; betaine biosynthesis via choline pathway; betaine from betaine aldehyde: step 1/1. Functionally, involved in the biosynthesis of the osmoprotectant glycine betaine. Catalyzes the irreversible oxidation of betaine aldehyde to the corresponding acid. This chain is Betaine aldehyde dehydrogenase, found in Brucella canis (strain ATCC 23365 / NCTC 10854 / RM-666).